A 3096-amino-acid chain; its full sequence is Unconventional myosin-XVB (3096 aa).

Disordered regions lie at residues 1-330 (MGRN…GPED), 389-489 (RPPE…GWGR), 508-540 (GGMP…ETPD), and 553-649 (AGRA…GPRL). Residues 19 to 33 (ASGEQESGSASADGA) show a composition bias toward low complexity. A compositionally biased stretch (basic and acidic residues) spans 34-50 (PSRERRSDRGQADRAKP). A compositionally biased stretch (basic residues) spans 124–143 (RRRRKRKDKGPSARRGRRTP). Basic and acidic residues-rich tracts occupy residues 212–222 (DWPHADTRGRE) and 261–288 (TFED…RGAE). Low complexity predominate over residues 307-330 (AVGQVPAAAGEGEAGAAAGAGPED). Residues 406–416 (WGRRKPDEGRG) show a composition bias toward basic and acidic residues. Residues 417–426 (HGRGSKGRGR) are compositionally biased toward basic residues. Positions 427 to 489 (GKADEGRGHE…HQRGYEGWGR (63 aa)) are enriched in basic and acidic residues. A Myosin motor domain is found at 720-1394 (EDMEDLARLR…GWQRLEELRD (675 aa)). 818–825 (GHSGSGKT) lines the ATP pocket. Residues 1273–1295 (LEDLIARLGRSHVYFIQCLTPNP) are actin-binding. The region spanning 1414–1443 (RQRVLPRMQARMRGFQARKRYLRRRAALGQ) is the IQ domain. One can recognise a MyTH4 1 domain in the interval 1551–1702 (RPGQPLAKPL…PTQLEWLAGW (152 aa)). Disordered regions lie at residues 1802-1833 (PGIQ…VQRS), 1963-2026 (MQQR…PKSF), and 2040-2262 (QITV…LPED). Pro residues predominate over residues 1808-1820 (SLPPGPPPGPAPT). The segment covering 1963-1980 (MQQRQQQARASEAASQAS) has biased composition (low complexity). Acidic residues predominate over residues 2059–2076 (AQEEEEEEEEEEEQEEQE). Positions 2102 to 2116 (APKEAEAEPAKETAA) are enriched in basic and acidic residues. Positions 2159–2170 (GPVPVPVQPSRP) are enriched in pro residues. The span at 2176–2185 (RKIDPKDEAL) shows a compositional bias: basic and acidic residues. 2 stretches are compositionally biased toward pro residues: residues 2199–2217 (MLSP…PRPK) and 2247–2261 (HTPP…PLPE). One can recognise an SH3 domain in the interval 2481-2542 (KDSGYVIALR…PADIVQPAAA (62 aa)). The interval 2548–2567 (SKEQRSGWHKGQLSNGEPGL) is disordered. The region spanning 2643-2789 (YTKAPIQESL…PPPGEMKAFL (147 aa)) is the MyTH4 2 domain. The region spanning 2795 to 3096 (RLLLIHLPGG…ASCTEWPSIN (302 aa)) is the FERM domain.

The protein belongs to the TRAFAC class myosin-kinesin ATPase superfamily. Myosin family. Detected in brain, stomach and kidney.

The protein localises to the cytoplasm. This chain is Unconventional myosin-XVB, found in Homo sapiens (Human).